We begin with the raw amino-acid sequence, 201 residues long: ADP-ribosylation factor-like protein 4D (201 aa).

Residue Gly-2 is the site of N-myristoyl glycine attachment. Residues 28 to 35, 76 to 80, and 135 to 138 contribute to the GTP site; these read GLDSAGKT, DVGGQ, and NKQD.

This sequence belongs to the small GTPase superfamily. Arf family. Interacts with CYTH2; the interaction is direct and ARL4D GTP-dependent. Does not interact with ARL4D.

It is found in the nucleus. It localises to the nucleolus. The protein localises to the cell membrane. Its subcellular location is the cytoplasm. Functionally, small GTP-binding protein which cycles between an inactive GDP-bound and an active GTP-bound form, and the rate of cycling is regulated by guanine nucleotide exchange factors (GEF) and GTPase-activating proteins (GAP). GTP-binding protein that does not act as an allosteric activator of the cholera toxin catalytic subunit. Recruits CYTH1, CYTH2, CYTH3 and CYTH4 to the plasma membrane in GDP-bound form. This chain is ADP-ribosylation factor-like protein 4D (ARL4D), found in Homo sapiens (Human).